A 252-amino-acid chain; its full sequence is MPFVVAIPARFSASRLPGKPLRLLGGRPLIHRVAERALSTGAREVWVATDDVRIAEAVASLDGVHVAMTANTHLSGSDRLAECARIAGWDPEVCVVNLQGDEPFAPAAGIRAVAALLHHSNADMATLATTIDKSEDLFNPNIVKLVCNTHGEALYFSRAPIPWNRDTFATTREPTPLGPWLRHIGLYACNAGFLQRFTTMQPGTLEQIESLEQLRVLEAGHRIAVRITPEHFPPGIDTPEDLAKAEKALEDV.

It belongs to the KdsB family.

Its subcellular location is the cytoplasm. It catalyses the reaction 3-deoxy-alpha-D-manno-oct-2-ulosonate + CTP = CMP-3-deoxy-beta-D-manno-octulosonate + diphosphate. It participates in nucleotide-sugar biosynthesis; CMP-3-deoxy-D-manno-octulosonate biosynthesis; CMP-3-deoxy-D-manno-octulosonate from 3-deoxy-D-manno-octulosonate and CTP: step 1/1. It functions in the pathway bacterial outer membrane biogenesis; lipopolysaccharide biosynthesis. Its function is as follows. Activates KDO (a required 8-carbon sugar) for incorporation into bacterial lipopolysaccharide in Gram-negative bacteria. This Xylella fastidiosa (strain Temecula1 / ATCC 700964) protein is 3-deoxy-manno-octulosonate cytidylyltransferase.